The chain runs to 47 residues: Defensin Ec-AMP-D1 (47 aa).

Disulfide bonds link Cys-3-Cys-47, Cys-14-Cys-34, Cys-20-Cys-41, and Cys-24-Cys-43.

In terms of biological role, has antifungal activity. Inhibits spore germination in F.graminearum (IC(50)=15 ug/ml), F.oxysporum (IC(50)=102 ug/ml), F.verticillioides (IC(50)=8.5 ug/ml) and D.maydis (IC(50)=12.5 ug/ml), but not in C.graminicola, B.cinerea and H.sativum at concentrations below 30 ug/ml. Inhibits hyphal development in P.infestans (IC(50)=25.5 ug/ml), but not release of zoospores. At concentrations above 100 ug/ml, induces morphological changes such as lysis of hyphae and sporangia in P.infestans. The sequence is that of Defensin Ec-AMP-D1 from Echinochloa crus-galli (Barnyard grass).